Reading from the N-terminus, the 212-residue chain is Fe/S biogenesis protein NfuA (212 aa).

Cys-169 and Cys-172 together coordinate [4Fe-4S] cluster.

It belongs to the NfuA family. As to quaternary structure, homodimer. It depends on [4Fe-4S] cluster as a cofactor.

Its function is as follows. Involved in iron-sulfur cluster biogenesis. Binds a 4Fe-4S cluster, can transfer this cluster to apoproteins, and thereby intervenes in the maturation of Fe/S proteins. Could also act as a scaffold/chaperone for damaged Fe/S proteins. This Acinetobacter baylyi (strain ATCC 33305 / BD413 / ADP1) protein is Fe/S biogenesis protein NfuA.